The following is a 464-amino-acid chain: Soluble pyridine nucleotide transhydrogenase (464 aa).

35–44 is a binding site for FAD; sequence EDKSQVGGNC.

Belongs to the class-I pyridine nucleotide-disulfide oxidoreductase family. Requires FAD as cofactor.

Its subcellular location is the cytoplasm. It carries out the reaction NAD(+) + NADPH = NADH + NADP(+). In terms of biological role, conversion of NADPH, generated by peripheral catabolic pathways, to NADH, which can enter the respiratory chain for energy generation. In Hahella chejuensis (strain KCTC 2396), this protein is Soluble pyridine nucleotide transhydrogenase.